Consider the following 72-residue polypeptide: General transcription factor IIH subunit 5 (72 aa).

Belongs to the TFB5 family. Component of the 7-subunit TFIIH core complex composed of XPB/repB, XPD/repD, gtf2h1, gtf2h2, gtf2h3, gtf2h4 and gtf2h5, which is active in NER. The core complex associates with the 3-subunit CDK-activating kinase (CAK) module composed of cycH/cyclin H, cdk7 and mnat1 to form the 10-subunit holoenzyme (holo-TFIIH) active in transcription.

The protein localises to the nucleus. In terms of biological role, component of the general transcription and DNA repair factor IIH (TFIIH) core complex, which is involved in general and transcription-coupled nucleotide excision repair (NER) of damaged DNA and, when complexed to CAK, in RNA transcription by RNA polymerase II. In NER, TFIIH acts by opening DNA around the lesion to allow the excision of the damaged oligonucleotide and its replacement by a new DNA fragment. In transcription, TFIIH has an essential role in transcription initiation. When the pre-initiation complex (PIC) has been established, TFIIH is required for promoter opening and promoter escape. Phosphorylation of the C-terminal tail (CTD) of the largest subunit of RNA polymerase II by the kinase module CAK controls the initiation of transcription. The chain is General transcription factor IIH subunit 5 (gtf2h5) from Dictyostelium discoideum (Social amoeba).